Consider the following 346-residue polypeptide: Probable RNA methyltransferase Pmen_2155 (346 aa).

The active-site Proton acceptor is the Glu-91. The Radical SAM core domain occupies 94-320 (LLPRDGLCIS…TKVRNSAGQD (227 aa)). Cys-101 and Cys-325 form a disulfide bridge. Residues Cys-108, Cys-112, and Cys-115 each contribute to the [4Fe-4S] cluster site. S-adenosyl-L-methionine is bound by residues 153–154 (GE), Ser-183, 206–208 (SLH), and Asn-282. Cys-325 serves as the catalytic S-methylcysteine intermediate.

It belongs to the radical SAM superfamily. RlmN family. [4Fe-4S] cluster serves as cofactor.

It localises to the cytoplasm. The chain is Probable RNA methyltransferase Pmen_2155 from Ectopseudomonas mendocina (strain ymp) (Pseudomonas mendocina).